Reading from the N-terminus, the 98-residue chain is Flagellar hook-basal body complex protein FliE (98 aa).

The interval 22 to 56 (KTDNATGAGNTFTQMLDSMSDTQSNAQTSVSNLLT) is disordered. The segment covering 23-56 (TDNATGAGNTFTQMLDSMSDTQSNAQTSVSNLLT) has biased composition (polar residues).

Belongs to the FliE family.

The protein resides in the bacterial flagellum basal body. This Listeria innocua serovar 6a (strain ATCC BAA-680 / CLIP 11262) protein is Flagellar hook-basal body complex protein FliE.